The following is a 283-amino-acid chain: uncharacterized protein (283 aa).

The span at 1–10 shows a compositional bias: polar residues; it reads MEVNKTTESL. Disordered regions lie at residues 1–96 and 255–283; these read MEVN…SGGN and DQEGDQEGEGRQEQHQGRQQEKKLEEAQI. 2 stretches are compositionally biased toward basic and acidic residues: residues 14 to 34 and 44 to 81; these read KVEHNHAQAESHEPRDQRDVK and SKQEKLDHGSGRTSSRHETSRSSKEGSIEDKSAEVSSR.

The protein belongs to the chlamydial CPn_0705/CT_671/TC_0042 family.

This is an uncharacterized protein from Chlamydia muridarum (strain MoPn / Nigg).